Here is a 179-residue protein sequence, read N- to C-terminus: Pyridoxal 5'-phosphate synthase subunit PdxT (179 aa).

48-50 (GES) is an L-glutamine binding site. Residue Cys79 is the Nucleophile of the active site. L-glutamine is bound by residues Arg101 and 127–128 (IR). Catalysis depends on charge relay system residues His163 and Glu165.

It belongs to the glutaminase PdxT/SNO family. In the presence of PdxS, forms a dodecamer of heterodimers. Only shows activity in the heterodimer.

The enzyme catalyses aldehydo-D-ribose 5-phosphate + D-glyceraldehyde 3-phosphate + L-glutamine = pyridoxal 5'-phosphate + L-glutamate + phosphate + 3 H2O + H(+). It carries out the reaction L-glutamine + H2O = L-glutamate + NH4(+). It participates in cofactor biosynthesis; pyridoxal 5'-phosphate biosynthesis. Catalyzes the hydrolysis of glutamine to glutamate and ammonia as part of the biosynthesis of pyridoxal 5'-phosphate. The resulting ammonia molecule is channeled to the active site of PdxS. The protein is Pyridoxal 5'-phosphate synthase subunit PdxT of Francisella tularensis subsp. novicida (strain U112).